A 2193-amino-acid chain; its full sequence is Genome polyprotein (2193 aa).

The segment at 1–23 is disordered; the sequence is MGSQVSTQRSGSHENSNSASEGS. Glycine 2 carries N-myristoyl glycine; by host lipidation. Residues 2–1503 lie on the Cytoplasmic side of the membrane; the sequence is GSQVSTQRSG…HLNRAVLVMQ (1502 aa). The segment at 566–588 is amphipathic alpha-helix; sequence GDPIADMIDQTVNNQVNRSLTAL. Active-site for protease 2A activity residues include histidine 883 and aspartate 901. Residues cysteine 918 and cysteine 920 each contribute to the Zn(2+) site. The active-site For protease 2A activity is the cysteine 972. Positions 978 and 980 each coordinate Zn(2+). Residues 1112–1184 form a membrane-binding region; that stretch reads SASWLKKFND…EQSAASQEDL (73 aa). Residues 1112-1250 form an oligomerization region; it reads SASWLKKFND…SPGTGKSLAT (139 aa). The interval 1133 to 1137 is RNA-binding; that stretch reads SSKIS. In terms of domain architecture, SF3 helicase spans 1216–1374; it reads EKRMNNYMQF…YKTDLGRLDA (159 aa). 1240 to 1247 is a binding site for ATP; it reads GSPGTGKS. Zn(2+)-binding residues include cysteine 1381, cysteine 1392, and cysteine 1397. The C4-type; degenerate zinc finger occupies 1381 to 1397; sequence CTENNTANFKRCSPLVC. The interval 1424–1431 is RNA-binding; the sequence is EYNNRSAI. The oligomerization stretch occupies residues 1435–1440; the sequence is IEALFQ. The stretch at 1504–1519 is an intramembrane region; sequence SIATVVAVVSLVYVIY. At 1520 to 2193 the chain is on the cytoplasmic side; sequence KLFAGFQGAY…NLRRNWLELF (674 aa). Tyrosine 1529 is subject to O-(5'-phospho-RNA)-tyrosine. In terms of domain architecture, Peptidase C3 spans 1549-1727; that stretch reads GPSLDFALSL…FCAGLKRGYF (179 aa). Residues histidine 1588, glutamate 1619, and cysteine 1695 each act as for protease 3C activity in the active site. A RdRp catalytic domain is found at 1958-2074; that stretch reads GSLFAFDYSG…SYPFPIDCSE (117 aa). Aspartate 1964 and aspartate 2060 together coordinate Mg(2+).

It belongs to the picornaviruses polyprotein family. In terms of assembly, interacts with capsid protein VP1 and capsid protein VP3 to form heterotrimeric protomers. Interacts with capsid protein VP0, and capsid protein VP3 to form heterotrimeric protomers. Five protomers subsequently associate to form pentamers which serve as building blocks for the capsid. Interacts with capsid protein VP2, capsid protein VP3 and capsid protein VP4 following cleavage of capsid protein VP0. As to quaternary structure, interacts with capsid protein VP1 and capsid protein VP3 in the mature capsid. In terms of assembly, interacts with capsid protein VP0 and capsid protein VP1 to form heterotrimeric protomers. Five protomers subsequently associate to form pentamers which serve as building blocks for the capsid. Interacts with capsid protein VP4 in the mature capsid. Interacts with protein 2C; this interaction may be important for virion morphogenesis. Interacts with capsid protein VP1 and capsid protein VP3. As to quaternary structure, homodimer. In terms of assembly, homohexamer; forms a hexameric ring structure with 6-fold symmetry characteristic of AAA+ ATPases. Interacts (via N-terminus) with host RTN3 (via reticulon domain); this interaction is important for viral replication. Interacts with capsid protein VP3; this interaction may be important for virion morphogenesis. Interacts with protein 3CD. As to quaternary structure, homodimer. Interacts with host GBF1. Interacts (via GOLD domain) with host ACBD3 (via GOLD domain); this interaction allows the formation of a viral protein 3A/ACBD3 heterotetramer with a 2:2 stoichiometry, which will stimulate the recruitment of host PI4KB in order to synthesize PI4P at the viral RNA replication sites. In terms of assembly, interacts with RNA-directed RNA polymerase. Interacts with host IFIH1/MDA5; this interaction inhibits host IFIH1. As to quaternary structure, protein 3CD: Interacts with protein 3AB and with RNA-directed RNA polymerase. In terms of assembly, interacts with Viral protein genome-linked and with protein 3CD. The cofactor is Mg(2+). In terms of processing, specific enzymatic cleavages in vivo by the viral proteases yield processing intermediates and the mature proteins. Post-translationally, myristoylation is required for the formation of pentamers during virus assembly. Further assembly of 12 pentamers and a molecule of genomic RNA generates the provirion. During virion maturation, immature virions are rendered infectious following cleavage of VP0 into VP4 and VP2. This maturation seems to be an autocatalytic event triggered by the presence of RNA in the capsid and it is followed by a conformational change infectious virion. In terms of processing, myristoylation is required during RNA encapsidation and formation of the mature virus particle. Post-translationally, VPg is uridylylated by the polymerase into VPg-pUpU. This acts as a nucleotide-peptide primer for the genomic RNA replication.

The protein localises to the virion. It localises to the host cytoplasm. The protein resides in the host cytoplasmic vesicle membrane. It is found in the host nucleus. It catalyses the reaction a ribonucleoside 5'-triphosphate + H2O = a ribonucleoside 5'-diphosphate + phosphate + H(+). The catalysed reaction is Selective cleavage of Tyr-|-Gly bond in the picornavirus polyprotein.. It carries out the reaction RNA(n) + a ribonucleoside 5'-triphosphate = RNA(n+1) + diphosphate. The enzyme catalyses Selective cleavage of Gln-|-Gly bond in the poliovirus polyprotein. In other picornavirus reactions Glu may be substituted for Gln, and Ser or Thr for Gly.. Replication or transcription is subject to high level of random mutations by the nucleotide analog ribavirin. In terms of biological role, forms an icosahedral capsid of pseudo T=3 symmetry with capsid proteins VP2 and VP3. The capsid is 300 Angstroms in diameter, composed of 60 copies of each capsid protein and enclosing the viral positive strand RNA genome. Capsid protein VP1 mainly forms the vertices of the capsid. Capsid protein VP1 interacts with host cell receptor to provide virion attachment to target host cells. This attachment induces virion internalization. After binding to its receptor, the capsid undergoes conformational changes. Capsid protein VP1 N-terminus (that contains an amphipathic alpha-helix) and capsid protein VP4 are externalized. Together, they shape a pore in the host membrane through which viral genome is translocated to host cell cytoplasm. Functionally, forms an icosahedral capsid of pseudo T=3 symmetry with capsid proteins VP2 and VP3. The capsid is 300 Angstroms in diameter, composed of 60 copies of each capsid protein and enclosing the viral positive strand RNA genome. Lies on the inner surface of the capsid shell. After binding to the host receptor, the capsid undergoes conformational changes. Capsid protein VP4 is released, Capsid protein VP1 N-terminus is externalized, and together, they shape a pore in the host membrane through which the viral genome is translocated into the host cell cytoplasm. Its function is as follows. Component of immature procapsids, which is cleaved into capsid proteins VP4 and VP2 after maturation. Allows the capsid to remain inactive before the maturation step. In terms of biological role, cysteine protease that cleaves viral polyprotein and specific host proteins. It is responsible for the autocatalytic cleavage between the P1 and P2 regions, which is the first cleavage occurring in the polyprotein. Also cleaves the host translation initiation factor EIF4G1, in order to shut down the capped cellular mRNA translation. Inhibits the host nucleus-cytoplasm protein and RNA trafficking by cleaving host members of the nuclear pores. Counteracts stress granule formation probably by antagonizing its assembly or promoting its dissassembly. Cleaves and inhibits host IFIH1/MDA5, thereby inhibiting the type-I IFN production and the establishment of the antiviral state. Cleaves and inhibits host MAVS, thereby inhibiting the type-I IFN production and the establishment of the antiviral state. Functionally, plays an essential role in the virus replication cycle by acting as a viroporin. Creates a pore in the host endoplasmic reticulum and as a consequence releases Ca2+ in the cytoplasm of infected cell. In turn, high levels of cytoplasmic calcium may trigger membrane trafficking and transport of viral ER-associated proteins to viroplasms, sites of viral genome replication. Induces and associates with structural rearrangements of intracellular membranes. Displays RNA-binding, nucleotide binding and NTPase activities. May play a role in virion morphogenesis and viral RNA encapsidation by interacting with the capsid protein VP3. Its function is as follows. Localizes the viral replication complex to the surface of membranous vesicles. Together with protein 3CD binds the Cis-Active RNA Element (CRE) which is involved in RNA synthesis initiation. Acts as a cofactor to stimulate the activity of 3D polymerase, maybe through a nucleid acid chaperone activity. In terms of biological role, localizes the viral replication complex to the surface of membranous vesicles. It inhibits host cell endoplasmic reticulum-to-Golgi apparatus transport and causes the disassembly of the Golgi complex, possibly through GBF1 interaction. This would result in depletion of MHC, trail receptors and IFN receptors at the host cell surface. Plays an essential role in viral RNA replication by recruiting ACBD3 and PI4KB at the viral replication sites, thereby allowing the formation of the rearranged membranous structures where viral replication takes place. Functionally, acts as a primer for viral RNA replication and remains covalently bound to viral genomic RNA. VPg is uridylylated prior to priming replication into VPg-pUpU. The oriI viral genomic sequence may act as a template for this. The VPg-pUpU is then used as primer on the genomic RNA poly(A) by the RNA-dependent RNA polymerase to replicate the viral genome. During genome replication, the VPg-RNA linkage is removed by the host TDP2, thereby accelerating replication. During the late stage of the replication cycle, host TDP2 is excluded from sites of viral RNA synthesis and encapsidation, allowing for the generation of progeny virions. Involved in the viral replication complex and viral polypeptide maturation. It exhibits protease activity with a specificity and catalytic efficiency that is different from protease 3C. Protein 3CD lacks polymerase activity. Protein 3CD binds to the 5'UTR of the viral genome. Its function is as follows. Major viral protease that mediates proteolytic processing of the polyprotein. Cleaves host EIF5B, contributing to host translation shutoff. Also cleaves host PABPC1, contributing to host translation shutoff. Binds and inhibits host IFIH1/MDA5, thereby inhibiting the type-I IFN production and the establishment of the antiviral state. Cleaves host MAP3K7/TAK1, resulting in inhibition of TRAF6-triggered NF-kappa-B induction. Cleaves host NLRP1, triggers host N-glycine-mediated degradation of the autoinhibitory NLRP1 N-terminal fragment. In terms of biological role, replicates the viral genomic RNA on the surface of intracellular membranes. May form linear arrays of subunits that propagate along a strong head-to-tail interaction called interface-I. Covalently attaches UMP to a tyrosine of VPg, which is used to prime RNA synthesis. The positive stranded RNA genome is first replicated at virus induced membranous vesicles, creating a dsRNA genomic replication form. This dsRNA is then used as template to synthesize positive stranded RNA genomes. ss(+)RNA genomes are either translated, replicated or encapsidated. The polypeptide is Genome polyprotein (Homo sapiens (Human)).